Here is a 479-residue protein sequence, read N- to C-terminus: Ribosomal RNA small subunit methyltransferase F (479 aa).

S-adenosyl-L-methionine-binding positions include A125 to K131, E149, D176, and D194. The active-site Nucleophile is C247.

Belongs to the class I-like SAM-binding methyltransferase superfamily. RsmB/NOP family.

It is found in the cytoplasm. It catalyses the reaction cytidine(1407) in 16S rRNA + S-adenosyl-L-methionine = 5-methylcytidine(1407) in 16S rRNA + S-adenosyl-L-homocysteine + H(+). In terms of biological role, specifically methylates the cytosine at position 1407 (m5C1407) of 16S rRNA. The protein is Ribosomal RNA small subunit methyltransferase F of Escherichia fergusonii (strain ATCC 35469 / DSM 13698 / CCUG 18766 / IAM 14443 / JCM 21226 / LMG 7866 / NBRC 102419 / NCTC 12128 / CDC 0568-73).